We begin with the raw amino-acid sequence, 371 residues long: Enterobactin C-glucosyltransferase (371 aa).

It belongs to the glycosyltransferase 28 family.

The protein localises to the cytoplasm. The catalysed reaction is enterobactin + UDP-alpha-D-glucose = monoglucosyl-enterobactin + UDP. The enzyme catalyses monoglucosyl-enterobactin + UDP-alpha-D-glucose = diglucosyl-enterobactin + UDP + H(+). It carries out the reaction diglucosyl-enterobactin + UDP-alpha-D-glucose = triglucosyl-enterobactin + UDP + H(+). Its pathway is siderophore biosynthesis; enterobactin biosynthesis. Functionally, catalyzes the successive monoglucosylation, diglucosylation and triglucosylation of enterobactin (Ent). Transfers glucosyl groups from uridine-5'-diphosphoglucose (UDP-Glc) to C5 of one, two or three of the 2,3-dihydroxybenzoyl (DHB) units of Ent to yield monoglucosyl-C-Ent (MGE), diglucosyl-C-Ent (DGE) and triglucosyl-C-Ent (TGE). Glucosylation decreases the membrane affinity of Ent and increases the iron acquisition rate. The sequence is that of Enterobactin C-glucosyltransferase from Escherichia coli O6:H1 (strain CFT073 / ATCC 700928 / UPEC).